The sequence spans 161 residues: Fatty acid-binding protein homolog 2 (161 aa).

The first 19 residues, 1–19 (MSSKFLILLAFCGATLVAA), serve as a signal peptide directing secretion.

The protein belongs to the calycin superfamily. Fatty-acid binding protein (FABP) family.

The protein localises to the secreted. May play a role in sequestering potentially toxic fatty acids and their peroxidation products, or it may be involved in the maintenance of the impermeable lipid layer of the eggshell. The sequence is that of Fatty acid-binding protein homolog 2 (lbp-2) from Caenorhabditis elegans.